A 299-amino-acid chain; its full sequence is Acetylglutamate kinase (299 aa).

Residues 62 to 63 (GG), arginine 84, and asparagine 188 each bind substrate.

Belongs to the acetylglutamate kinase family. ArgB subfamily.

It localises to the cytoplasm. The catalysed reaction is N-acetyl-L-glutamate + ATP = N-acetyl-L-glutamyl 5-phosphate + ADP. It functions in the pathway amino-acid biosynthesis; L-arginine biosynthesis; N(2)-acetyl-L-ornithine from L-glutamate: step 2/4. Its function is as follows. Catalyzes the ATP-dependent phosphorylation of N-acetyl-L-glutamate. The polypeptide is Acetylglutamate kinase (Methanosarcina acetivorans (strain ATCC 35395 / DSM 2834 / JCM 12185 / C2A)).